Reading from the N-terminus, the 375-residue chain is MEVPRLDHALSSPSSPCEEIKNLSLEAIQLCDRDGNKSQDSGIAEMEELPVPHNIKINNITCDSFKISWDMDSKSKDRITHYFIDLNKKENKNSNKFKHKDVPTKLVAKAVPLPMTVRGHWFLSPRTEYTVAVQTASKQVDGDYVVSEWSEIIEFCTADYSKVHLTQLLEKADVIAGRMLKFSVFYRNQHKEYFDYVRDHYGNAMQPSIKDNSGSHGSPISGKLEGIFFSCSTEFNTGKPPQDSPYGRYRFEIAAEKLFNPNTNLYFGDFYCMYTAYHYVILVIAPVGSPGDEFCKQRLPQLNSKDNKFLTCTEEDGRLLYHHAQDVILEVIYTDPVALSLGTVAEITGHQLMSLSTANAKKDPSCKTCNISVGR.

Phosphoserine occurs at positions 11, 12, and 15. N-linked (GlcNAc...) asparagine glycosylation is present at asparagine 22. Position 24 is a phosphoserine (serine 24). Asparagine 36 carries an N-linked (GlcNAc...) asparagine glycan. The 110-residue stretch at 51–160 (VPHNIKINNI…EIIEFCTADY (110 aa)) folds into the Fibronectin type-III domain.

The protein belongs to the PHYHIP family.

Functionally, may play a role in the development of the central system. The chain is Phytanoyl-CoA hydroxylase-interacting protein-like (Phyhipl) from Rattus norvegicus (Rat).